Reading from the N-terminus, the 617-residue chain is mRNA-decapping enzyme 1B (617 aa).

Ala2 carries the post-translational modification N-acetylalanine. Ser147 is modified (phosphoserine). Tyr191 carries the phosphotyrosine modification. Disordered regions lie at residues 195-222 (NLIK…LDPE) and 243-266 (TVEP…KLPI). Residues 205 to 219 (SENQQQRIPQPNQTL) are compositionally biased toward polar residues. A compositionally biased stretch (low complexity) spans 252 to 261 (QQQQQQQQQQ). Phosphoserine is present on residues Ser275 and Ser336. The interval 362-426 (TPGAANKCDP…VGHQAHGREQ (65 aa)) is disordered. Positions 371 to 381 (PSTPAPASSAA) are enriched in low complexity. A Phosphothreonine modification is found at Thr392. Phosphoserine occurs at positions 448 and 511.

This sequence belongs to the DCP1 family. Interacts with DCP1A. As to quaternary structure, (Microbial infection) Interacts with rotavirus A non-structural protein 2; this interaction probably plays a role in the sequestration of DCP1B in viral factories. Interacts with rotavirus A non-structural protein 5; this interaction probably plays a role in its sequestration in viral factories.

The protein resides in the cytoplasm. Its subcellular location is the nucleus. The enzyme catalyses a 5'-end (N(7)-methyl 5'-triphosphoguanosine)-ribonucleoside in mRNA + H2O = N(7)-methyl-GDP + a 5'-end phospho-ribonucleoside in mRNA + 2 H(+). In terms of biological role, may play a role in the degradation of mRNAs, both in normal mRNA turnover and in nonsense-mediated mRNA decay. May remove the 7-methyl guanine cap structure from mRNA molecules, yielding a 5'-phosphorylated mRNA fragment and 7m-GDP. The protein is mRNA-decapping enzyme 1B (DCP1B) of Homo sapiens (Human).